Here is a 123-residue protein sequence, read N- to C-terminus: UPF0102 protein Cbei_1183 (123 aa).

This sequence belongs to the UPF0102 family.

The polypeptide is UPF0102 protein Cbei_1183 (Clostridium beijerinckii (strain ATCC 51743 / NCIMB 8052) (Clostridium acetobutylicum)).